Reading from the N-terminus, the 549-residue chain is Chaperonin GroEL (549 aa).

ATP is bound by residues Thr-29 to Pro-32, Lys-50, Asp-86 to Thr-90, Gly-413, Asn-479 to Ala-481, and Asp-496. Positions Val-522–Phe-549 are disordered. Over residues Gly-532–Phe-549 the composition is skewed to gly residues.

This sequence belongs to the chaperonin (HSP60) family. As to quaternary structure, forms a cylinder of 14 subunits composed of two heptameric rings stacked back-to-back. Interacts with the co-chaperonin GroES.

The protein resides in the cytoplasm. The catalysed reaction is ATP + H2O + a folded polypeptide = ADP + phosphate + an unfolded polypeptide.. Functionally, together with its co-chaperonin GroES, plays an essential role in assisting protein folding. The GroEL-GroES system forms a nano-cage that allows encapsulation of the non-native substrate proteins and provides a physical environment optimized to promote and accelerate protein folding. This chain is Chaperonin GroEL, found in Deinococcus deserti (strain DSM 17065 / CIP 109153 / LMG 22923 / VCD115).